The sequence spans 512 residues: 2-isopropylmalate synthase (512 aa).

One can recognise a Pyruvate carboxyltransferase domain in the interval 5-268 (LIIFDTTLRD…DLGIATQHIL (264 aa)). Mn(2+)-binding residues include aspartate 14, histidine 202, histidine 204, and asparagine 239. Residues 394 to 512 (GFVSLFQQSE…NKADRVAAQG (119 aa)) are regulatory domain.

Belongs to the alpha-IPM synthase/homocitrate synthase family. LeuA type 1 subfamily. As to quaternary structure, homodimer. It depends on Mn(2+) as a cofactor.

The protein resides in the cytoplasm. The enzyme catalyses 3-methyl-2-oxobutanoate + acetyl-CoA + H2O = (2S)-2-isopropylmalate + CoA + H(+). The protein operates within amino-acid biosynthesis; L-leucine biosynthesis; L-leucine from 3-methyl-2-oxobutanoate: step 1/4. In terms of biological role, catalyzes the condensation of the acetyl group of acetyl-CoA with 3-methyl-2-oxobutanoate (2-ketoisovalerate) to form 3-carboxy-3-hydroxy-4-methylpentanoate (2-isopropylmalate). This chain is 2-isopropylmalate synthase, found in Verminephrobacter eiseniae (strain EF01-2).